A 326-amino-acid chain; its full sequence is MNTCTTIRNNWQLDEILELFNTPFNDLILRSHLTHRQFFNNNEIQLAALLNIKTGGCPENCRYCSQSAHYKTDLQKEALLDVENIKKAIQTAKNSGADRFCFAAAWRQLRDKDIEYICNIINLIKSEKLESCASLGMITLDQAKKLKNAGLDFYNHNIDTSRDFYSNVTTTRNYDDRLASLNNIYEAGINICSGGILGLGESIEDRAKMLLTLANLKEHPRSVPINRLVPIKGTPFENNIKVDNIDFIKTIAVTRILMPKSYVRLAAGRKDMSEEMQALCLFAGANSIFYGEKLLTTPNSNCDDDKNLLSKLGIKTKEPVLLNSQN.

In terms of domain architecture, Radical SAM core spans 42-266; sequence NEIQLAALLN…LMPKSYVRLA (225 aa). [4Fe-4S] cluster-binding residues include Cys-57, Cys-61, and Cys-64. Cys-101, Cys-132, Cys-192, and Arg-264 together coordinate [2Fe-2S] cluster.

The protein belongs to the radical SAM superfamily. Biotin synthase family. In terms of assembly, homodimer. Requires [4Fe-4S] cluster as cofactor. The cofactor is [2Fe-2S] cluster.

It catalyses the reaction (4R,5S)-dethiobiotin + (sulfur carrier)-SH + 2 reduced [2Fe-2S]-[ferredoxin] + 2 S-adenosyl-L-methionine = (sulfur carrier)-H + biotin + 2 5'-deoxyadenosine + 2 L-methionine + 2 oxidized [2Fe-2S]-[ferredoxin]. The protein operates within cofactor biosynthesis; biotin biosynthesis; biotin from 7,8-diaminononanoate: step 2/2. Functionally, catalyzes the conversion of dethiobiotin (DTB) to biotin by the insertion of a sulfur atom into dethiobiotin via a radical-based mechanism. This chain is Biotin synthase, found in Ehrlichia chaffeensis (strain ATCC CRL-10679 / Arkansas).